The primary structure comprises 673 residues: Inactive polyglycylase TTLL10 (673 aa).

The segment at 1-132 (MDHSCTRFIH…ADSDDTNAAG (132 aa)) is disordered. The segment covering 8 to 36 (FIHRRGPPTRTRAGFKRGKRPRIQQRPRA) has biased composition (basic residues). Over residues 52 to 62 (ASQPGPCPAPG) the composition is skewed to pro residues. Basic and acidic residues predominate over residues 89–105 (PDHDADGHCGPDLEGAE). The TTL domain maps to 155–552 (PGPFFYIGGS…TFRKSLRGQK (398 aa)). Residues 362-365 (QRYI), lysine 375, and aspartate 377 contribute to the ATP site. The disordered stretch occupies residues 569–673 (EADPRPHLGG…EREEPENARP (105 aa)). The segment covering 612 to 627 (PAPPPLVPQRPRPPGP) has biased composition (pro residues). The segment covering 661 to 673 (AKEEREEPENARP) has biased composition (basic and acidic residues).

Its function is as follows. Inactive polyglycylase. The polypeptide is Inactive polyglycylase TTLL10 (Homo sapiens (Human)).